We begin with the raw amino-acid sequence, 150 residues long: Large ribosomal subunit protein bL9 (150 aa).

It belongs to the bacterial ribosomal protein bL9 family.

Functionally, binds to the 23S rRNA. The sequence is that of Large ribosomal subunit protein bL9 from Latilactobacillus sakei subsp. sakei (strain 23K) (Lactobacillus sakei subsp. sakei).